The sequence spans 423 residues: Diels-Alderase pyiF (423 aa).

Positions 1–17 (MLPSFIFVYSLLATATA) are cleaved as a signal peptide. Asn60, Asn92, and Asn219 each carry an N-linked (GlcNAc...) asparagine glycan.

This sequence belongs to the Diels-Alderase family.

It participates in mycotoxin biosynthesis. In terms of biological role, diels-Alderase; part of the gene cluster that mediates the biosynthesis of the mycotoxin pyrichalasin H, a tyrosine-derived cytochalasan that inhibits the growth of rice seedlings, but also inhibits lymphocyte capping and actin polymerization and alters cell morphology. Pyrichalasin H is indicated as the responsible agent for the genus-specific pathogenicity of M.grisea toward crabgrass. The first step in the pathway is catalyzed by the O-methyltransferase pyiA which methylates free tyrosine to generate the precursor O-methyltyrosine. The hybrid PKS-NRPS pyiS, assisted by the enoyl reductase pyiC, are responsible for fusion of the O-methyltyrosine precursor and the polyketide backbone. The polyketide synthase module (PKS) of pyiS is responsible for the synthesis of the polyketide backbone and the downstream nonribosomal peptide synthetase (NRPS) amidates the carboxyl end of the polyketide with the O-methyltyrosine precursor. As the NRPS A-domain demonstrates substrate tolerance, pyiS can also use phenylalanine, tyrosine and even para-chlorophenylalanine as amino acid precursor, which leads to the production of novel cytochalasans, including halogenated cytochalasans. Because pyiS lacks a designated enoylreductase (ER) domain, the required activity is provided the enoyl reductase pyiC. Reduction by the hydrolyase pyiE leads to 1,5-dihydropyrrolone, which is substrate for dehydration and intra-molecular Diels-Alder cyclization by the Diels-Alderase pyiF to yield the required isoindolone-fused macrocycle. The tailoring cytochrome P450 monooxygenases piyD and piyG catalyze the hydroxylation at C-18 and C-7, respectivily, whereas the short-chain dehydrogenase/reductase pyiH reduces the carbonyl at C-21 in preparation for the transfer of an acetyl group by the acetyltransferase pyiB. These 3 reactions whose order is not clear yet, lead to the production of O-methylpyrichalasin J, a deacetylated pyrichalasin H. Finally, pyiB to converts O-methylpyrichalasin J into the final product pyrichalasin H via acetylation of C-21. This chain is Diels-Alderase pyiF, found in Pyricularia grisea (Crabgrass-specific blast fungus).